The chain runs to 457 residues: tRNA-2-methylthio-N(6)-dimethylallyladenosine synthase (457 aa).

Residues 3–120 enclose the MTTase N-terminal domain; that stretch reads KKVYVKTFGC…LPQMIDARRA (118 aa). The [4Fe-4S] cluster site is built by Cys12, Cys49, Cys83, Cys157, Cys161, and Cys164. A Radical SAM core domain is found at 143-377; sequence RVEGPSAFVS…QATIEENVAR (235 aa). The TRAM domain maps to 380–447; sequence QSMVGKVERI…PHSLRGELVI (68 aa).

Belongs to the methylthiotransferase family. MiaB subfamily. In terms of assembly, monomer. It depends on [4Fe-4S] cluster as a cofactor.

It is found in the cytoplasm. The catalysed reaction is N(6)-dimethylallyladenosine(37) in tRNA + (sulfur carrier)-SH + AH2 + 2 S-adenosyl-L-methionine = 2-methylsulfanyl-N(6)-dimethylallyladenosine(37) in tRNA + (sulfur carrier)-H + 5'-deoxyadenosine + L-methionine + A + S-adenosyl-L-homocysteine + 2 H(+). In terms of biological role, catalyzes the methylthiolation of N6-(dimethylallyl)adenosine (i(6)A), leading to the formation of 2-methylthio-N6-(dimethylallyl)adenosine (ms(2)i(6)A) at position 37 in tRNAs that read codons beginning with uridine. This is tRNA-2-methylthio-N(6)-dimethylallyladenosine synthase from Burkholderia cenocepacia (strain ATCC BAA-245 / DSM 16553 / LMG 16656 / NCTC 13227 / J2315 / CF5610) (Burkholderia cepacia (strain J2315)).